Reading from the N-terminus, the 422-residue chain is MNEDRKNRESGKLLYCSFCGKSQHEVRKLIAGPAVFVCDECVELCNDIIREDLQGSEAGGVEGLPKPKEMKAILDQYVIGQDKAKRILSVAVYNHYKRLKARTFRNDVELAKSNVLLIGPTGSGKTLLAETLARVLDVPFTIADATTLTEAGYVGEDVENIIQKLLLACDYDVEKAEQGIVYIDEIDKISRKADSPSITRDVSGEGVQQALLKLMEGTVASVPPQGGRKHPQQEFLQVNTANILFICGGAFAGLDKTIRSRSERSGIGFSAEVKSKEENTNVGEILAGVEAEDLIRYGLIPEFIGRLPVVATLEELDEAALVRILIEPKNALVKQYARLFEMEGCELEILPEALGAIARRAMERKTGARGLRTIIEHALLDTMYELPSAEDVGKVVVDAKVIRGETEPHRVYRSVERQRVSA.

Residues 4 to 57 (DRKNRESGKLLYCSFCGKSQHEVRKLIAGPAVFVCDECVELCNDIIREDLQGSE) form the ClpX-type ZB domain. Residues Cys-16, Cys-19, Cys-38, and Cys-41 each coordinate Zn(2+). 120 to 127 (PTGSGKTL) is an ATP binding site.

The protein belongs to the ClpX chaperone family. Component of the ClpX-ClpP complex. Forms a hexameric ring that, in the presence of ATP, binds to fourteen ClpP subunits assembled into a disk-like structure with a central cavity, resembling the structure of eukaryotic proteasomes.

Its function is as follows. ATP-dependent specificity component of the Clp protease. It directs the protease to specific substrates. Can perform chaperone functions in the absence of ClpP. This chain is ATP-dependent Clp protease ATP-binding subunit ClpX 1, found in Methylococcus capsulatus (strain ATCC 33009 / NCIMB 11132 / Bath).